The chain runs to 281 residues: UPF0046 protein C25E10.12 (281 aa).

The protein belongs to the UPF0046 family.

This chain is UPF0046 protein C25E10.12, found in Caenorhabditis elegans.